The following is a 253-amino-acid chain: Decarboxylase DEC1 (253 aa).

K121 functions as the Schiff-base intermediate with acetoacetate in the catalytic mechanism.

Belongs to the ADC family.

It participates in mycotoxin biosynthesis. In terms of biological role, decarboxylase; part of the Tox1B locus, one of the 2 loci that mediate the biosynthesis of T-toxin, a family of linear polyketides 37 to 45 carbons in length, of which the major component is 41 carbons, and which leads to high virulence to maize. One of the PKSs (PKS1 or PKS2) could synthesize a precursor, used subsequently by the other PKS as starter unit, to add additional carbons. Variability in the length of the final carbon backbone C35-47 could be achieved by varying the number of condensation cycles, or use of different starter or extender units or might be due to decarboxylation of the penultimate product, catalyzed by DEC1. Additional proteins are required for the biosynthesis of T-toxin, including oxidoreductases RED1, RED2, RED3, LAM1 and OXI1, as well as esterase TOX9. The sequence is that of Decarboxylase DEC1 from Cochliobolus heterostrophus (strain C4 / ATCC 48331 / race T) (Southern corn leaf blight fungus).